We begin with the raw amino-acid sequence, 1479 residues long: Protein CHROMATIN REMODELING 20 (1479 aa).

A coiled-coil region spans residues 19-49; sequence EVIVESKEDEMDIIIEENREAEQEVMEVKAR. A compositionally biased stretch (basic and acidic residues) spans 40–55; sequence EQEVMEVKARDGRGEQ. A disordered region spans residues 40–109; it reads EQEVMEVKAR…DELDLEKPLS (70 aa). Low complexity predominate over residues 76 to 86; sequence DASSRSESSDF. Over residues 94-109 the composition is skewed to basic and acidic residues; the sequence is ILSRRDDELDLEKPLS. Positions 109-199 form a coiled coil; it reads SEEEIDELIS…EQLDGAGIEL (91 aa). The region spanning 472–601 is the ADD domain; the sequence is RDDSQNPANN…KKSIELSSDS (130 aa). The GATA-type; atypical zinc-finger motif lies at 483–514; sequence RCTACNKVAVEVHSHPLLEVIVCMDCKRSIED. The PHD-type; atypical zinc-finger motif lies at 524–577; that stretch reads ERHCEWCGHIADLIDCRTCEKLFCASCIKRNIGEEYMSEAQSSGWDCCCCSPIP. The stretch at 578–598 forms a coiled coil; sequence LQRLTLELEKAMRDKKSIELS. The interval 594 to 615 is disordered; that stretch reads SIELSSDSSSDSSSDNNSVDTD. Low complexity predominate over residues 598 to 615; sequence SSDSSSDSSSDNNSVDTD. The 184-residue stretch at 741–924 folds into the Helicase ATP-binding domain; that stretch reads VKSGDKGLGC…YCMVDFVREG (184 aa). Residue 754-761 participates in ATP binding; that stretch reads HTMGLGKT. A DEAH box motif is present at residues 875 to 878; it reads DEAH. The Helicase C-terminal domain maps to 1122-1290; that stretch reads DILSMSADVG…QVHRTISKEE (169 aa). The segment at 1400 to 1423 is disordered; the sequence is SESPVVPKPSPSTQTEPLPQPKGF.

This sequence belongs to the SNF2/RAD54 helicase family.

It localises to the nucleus. It is found in the chromosome. Its subcellular location is the telomere. In terms of biological role, involved in transcriptional regulation and chromatin remodeling. Facilitates DNA replication in multiple cellular environments and is required for efficient replication of a subset of genomic loci. Binds to DNA tandem repeat sequences in both telomeres and euchromatin and in vitro binds DNA quadruplex structures. May help stabilizing G-rich regions into regular chromatin structures by remodeling G4 DNA and incorporating H3.3-containing nucleosomes. Involved in DNA repair of gamma-irradiation-mediated damages. The protein is Protein CHROMATIN REMODELING 20 of Arabidopsis thaliana (Mouse-ear cress).